Reading from the N-terminus, the 342-residue chain is Uroporphyrinogen decarboxylase (342 aa).

Substrate-binding positions include 22 to 26, Phe-41, Asp-72, Tyr-146, Ser-201, and His-317; that span reads RQAGR.

Belongs to the uroporphyrinogen decarboxylase family. In terms of assembly, homodimer.

Its subcellular location is the cytoplasm. It carries out the reaction uroporphyrinogen III + 4 H(+) = coproporphyrinogen III + 4 CO2. It participates in porphyrin-containing compound metabolism; protoporphyrin-IX biosynthesis; coproporphyrinogen-III from 5-aminolevulinate: step 4/4. In terms of biological role, catalyzes the decarboxylation of four acetate groups of uroporphyrinogen-III to yield coproporphyrinogen-III. The sequence is that of Uroporphyrinogen decarboxylase from Orientia tsutsugamushi (strain Boryong) (Rickettsia tsutsugamushi).